The chain runs to 427 residues: Histidinol dehydrogenase (427 aa).

Substrate is bound by residues serine 232, glutamine 254, and histidine 257. Zn(2+) is bound by residues glutamine 254 and histidine 257. Active-site proton acceptor residues include glutamate 322 and histidine 323. Residues histidine 323, aspartate 356, glutamate 410, and histidine 415 each coordinate substrate. Zn(2+) is bound at residue aspartate 356. Histidine 415 is a Zn(2+) binding site.

Belongs to the histidinol dehydrogenase family. It depends on Zn(2+) as a cofactor.

The enzyme catalyses L-histidinol + 2 NAD(+) + H2O = L-histidine + 2 NADH + 3 H(+). It participates in amino-acid biosynthesis; L-histidine biosynthesis; L-histidine from 5-phospho-alpha-D-ribose 1-diphosphate: step 9/9. Functionally, catalyzes the sequential NAD-dependent oxidations of L-histidinol to L-histidinaldehyde and then to L-histidine. In Listeria innocua serovar 6a (strain ATCC BAA-680 / CLIP 11262), this protein is Histidinol dehydrogenase.